Here is a 230-residue protein sequence, read N- to C-terminus: Claudin-2 (230 aa).

Over 1 to 7 (MASLGLQ) the chain is Cytoplasmic. A helical transmembrane segment spans residues 8 to 28 (LVGYVLGLLGLLGTVIAMLLP). Residues 29–81 (SWRTSSYVGASIVTAVGFSKGLWMECATHSTGITQCDIYSTMLGLPADIQAAQ) lie on the Extracellular side of the membrane. Cysteine 54 and cysteine 64 are joined by a disulfide. Residues 82 to 102 (AMMVTSSAMSSLACIVSVVGM) traverse the membrane as a helical segment. The Cytoplasmic segment spans residues 103–116 (RCTVFFQESRAKDR). Residues 117–137 (VAVVGGVFFILGGLLGFIPVA) form a helical membrane-spanning segment. Residues 138-162 (WNLHGILRDFYSPLVPDSMKFEIGE) lie on the Extracellular side of the membrane. A helical transmembrane segment spans residues 163–183 (ALYLGIISSLFSLIAGIFLCF). Topologically, residues 184 to 230 (SCSPQGNRSNYYDAYQAQPLATRSSPRPGQAPKGKSEFNSYSLTGYV) are cytoplasmic. The disordered stretch occupies residues 205-230 (TRSSPRPGQAPKGKSEFNSYSLTGYV). Lysine 218 is covalently cross-linked (Glycyl lysine isopeptide (Lys-Gly) (interchain with G-Cter in SUMO)). Serine 219 and serine 223 each carry phosphoserine. A compositionally biased stretch (polar residues) spans 220 to 230 (EFNSYSLTGYV). Residues 229–230 (YV) are interaction with TJP1, TJP2 and TJP3.

This sequence belongs to the claudin family. As to quaternary structure, can form homo- and heteropolymers with other claudins to mediate paracellular barrier and channel functions of tight junctions in response to physiological stimuli. Homopolymers interact with CLDN3, but not CLDN1, homopolymers. Directly interacts with TJP1/ZO-1, TJP2/ZO-2 and TJP3/ZO-3. In terms of processing, the disulfide bond is necessary for pore formation, but is not required for correct protein trafficking.

The protein resides in the cell junction. It localises to the tight junction. It is found in the cell membrane. It carries out the reaction Na(+)(in) = Na(+)(out). The catalysed reaction is K(+)(in) = K(+)(out). The enzyme catalyses Rb(+)(in) = Rb(+)(out). It catalyses the reaction Li(+)(in) = Li(+)(out). It carries out the reaction Cs(+)(in) = Cs(+)(out). The catalysed reaction is Ca(2+)(in) = Ca(2+)(out). The enzyme catalyses methylamine(out) = methylamine(in). It catalyses the reaction choline(out) = choline(in). It carries out the reaction H2O(in) = H2O(out). Forms paracellular channels: polymerizes in tight junction strands with cation- and water-selective channels through the strands, conveying epithelial permeability in a process known as paracellular tight junction permeability. In intestinal epithelium, allows for sodium and water fluxes from the peritoneal side to the lumen of the intestine to regulate nutrient absorption and clear enteric pathogens as part of mucosal immune response. In kidney, allows passive sodium and calcium reabsorption across proximal tubules from the lumen back to the bloodstream. In the hepatobiliary tract, allows paracellular water and cation fluxes in the hepatic perivenous areas and biliary epithelium to generate bile flow and maintain osmotic gradients. This Bos taurus (Bovine) protein is Claudin-2 (CLDN2).